The chain runs to 320 residues: Sucrose operon repressor (320 aa).

Residues 1-55 (MKNIADIAKIAGVSKSTVSRYLNNGSVSLKTQQKLDEIIRENDYQPNQFAQSLRA) enclose the HTH lacI-type domain. Residues 4–23 (IADIAKIAGVSKSTVSRYLN) constitute a DNA-binding region (H-T-H motif).

In terms of biological role, negative regulator of scrB expression. The chain is Sucrose operon repressor (scrR) from Staphylococcus xylosus.